The following is a 107-amino-acid chain: Phosphoribosyl-ATP pyrophosphatase (107 aa).

The protein belongs to the PRA-PH family.

Its subcellular location is the cytoplasm. The enzyme catalyses 1-(5-phospho-beta-D-ribosyl)-ATP + H2O = 1-(5-phospho-beta-D-ribosyl)-5'-AMP + diphosphate + H(+). It functions in the pathway amino-acid biosynthesis; L-histidine biosynthesis; L-histidine from 5-phospho-alpha-D-ribose 1-diphosphate: step 2/9. The protein is Phosphoribosyl-ATP pyrophosphatase of Methylobacterium radiotolerans (strain ATCC 27329 / DSM 1819 / JCM 2831 / NBRC 15690 / NCIMB 10815 / 0-1).